Here is a 445-residue protein sequence, read N- to C-terminus: Ribosomal protein uS12 methylthiotransferase RimO (445 aa).

The MTTase N-terminal domain maps to proline 10–proline 120. Cysteine 19, cysteine 55, cysteine 84, cysteine 153, cysteine 157, and cysteine 160 together coordinate [4Fe-4S] cluster. In terms of domain architecture, Radical SAM core spans leucine 139–arginine 378. A TRAM domain is found at glutamine 380–isoleucine 445.

Belongs to the methylthiotransferase family. RimO subfamily. [4Fe-4S] cluster is required as a cofactor.

The protein localises to the cytoplasm. It carries out the reaction L-aspartate(89)-[ribosomal protein uS12]-hydrogen + (sulfur carrier)-SH + AH2 + 2 S-adenosyl-L-methionine = 3-methylsulfanyl-L-aspartate(89)-[ribosomal protein uS12]-hydrogen + (sulfur carrier)-H + 5'-deoxyadenosine + L-methionine + A + S-adenosyl-L-homocysteine + 2 H(+). Functionally, catalyzes the methylthiolation of an aspartic acid residue of ribosomal protein uS12. The sequence is that of Ribosomal protein uS12 methylthiotransferase RimO from Pseudomonas fluorescens (strain Pf0-1).